Consider the following 132-residue polypeptide: Fatty acid-binding protein, adipocyte (132 aa).

Residue cysteine 2 is modified to N-acetylcysteine. Phosphoserine is present on serine 13. Phosphotyrosine; by Tyr-kinases is present on tyrosine 20. The short motif at 22-32 (KEVGVGFATRK) is the Nuclear localization signal element. 127–129 (RVY) serves as a coordination point for a fatty acid.

The protein belongs to the calycin superfamily. Fatty-acid binding protein (FABP) family. Monomer. Homodimer. Interacts with PPARG.

The protein localises to the cytoplasm. The protein resides in the nucleus. Lipid transport protein in adipocytes. Binds both long chain fatty acids and retinoic acid. Delivers long-chain fatty acids and retinoic acid to their cognate receptors in the nucleus. This chain is Fatty acid-binding protein, adipocyte (Fabp4), found in Rattus norvegicus (Rat).